The sequence spans 628 residues: (+)-alpha pinene synthase 1, chloroplastic (628 aa).

The transit peptide at 1–18 (MALVSAVPLNSKLCLCRT) directs the protein to the chloroplast. Mg(2+) is bound by residues D379, D383, and D531. The DDXXD motif signature appears at 379 to 383 (DDIYD).

It belongs to the terpene synthase family. Tpsd subfamily. Mg(2+) serves as cofactor. It depends on Mn(2+) as a cofactor.

The protein resides in the plastid. Its subcellular location is the chloroplast. It carries out the reaction (2E)-geranyl diphosphate = (1R,5R)-alpha-pinene + diphosphate. It participates in terpene metabolism; oleoresin biosynthesis. Its pathway is secondary metabolite biosynthesis; terpenoid biosynthesis. In terms of biological role, monoterpene synthase (TPS) involved in the biosynthesis of monoterpene natural products included in conifer oleoresin secretions and volatile emissions; these compounds contribute to biotic and abiotic stress defense against herbivores and pathogens. Catalyzes the conversion of (2E)-geranyl diphosphate (GPP) to (+)-alpha-pinene. The polypeptide is (+)-alpha pinene synthase 1, chloroplastic (Pinus banksiana (Jack pine)).